The primary structure comprises 914 residues: Solute carrier family 12 member 9 (914 aa).

Over 1 to 36 the chain is Cytoplasmic; sequence MASENSPLLAYRLLGEEGAAFPPNGAGGSGVASARK. Residue Ser-6 is modified to Phosphoserine. Residues 37–57 form a helical membrane-spanning segment; sequence LSTFLGVVVPTVLSMFSIVVF. At 58–72 the chain is on the extracellular side; sequence LRIGFVVGHAGLLQA. A helical transmembrane segment spans residues 73-93; sequence LAMLLVAYVILALTVLSVCAI. At 94-119 the chain is on the cytoplasmic side; that stretch reads ATNGAVRGGGAYFMISRTLGPEVGGS. The chain crosses the membrane as a helical span at residues 120–140; sequence IGLMFYLANVCGCAVSLLGLV. Over 141–167 the chain is Extracellular; sequence ESILDVFGADVTGSSGIKVLPQGYGWN. A helical transmembrane segment spans residues 168-188; sequence LLYGSLLLGLVGGVCALGAGL. At 189 to 193 the chain is on the cytoplasmic side; the sequence is YARAS. A helical membrane pass occupies residues 194-214; it reads FLTFLLVSGSLASVLVSFVAV. Topologically, residues 215 to 262 are extracellular; that stretch reads GPRNITLAPRPGTNGSSVPPRHGHFTGFNGSTLKDNLGAGYAEDYTTG. Residues Asn-218, Asn-228, and Asn-243 are each glycosylated (N-linked (GlcNAc...) asparagine). A helical transmembrane segment spans residues 263 to 283; that stretch reads AMMTFASVFAVLFNGCTGIMA. Residues 284–297 lie on the Cytoplasmic side of the membrane; that stretch reads GANMSGELKDPSRA. A helical membrane pass occupies residues 298–318; the sequence is IPLGTIIAVAYTFFIYILLFF. The Extracellular segment spans residues 319-338; that stretch reads LSSFTCDRALLQGDYGFFRD. Residues 339–359 traverse the membrane as a helical segment; sequence ISLWPPLVLIGIYATALSASM. Over 360–376 the chain is Cytoplasmic; the sequence is SSLIGASRILHALAQDD. Residues 377–399 form a helical membrane-spanning segment; it reads LFGVILAPAKVVSGGGNPWGAVL. The Extracellular portion of the chain corresponds to 400 to 416; that stretch reads YSWGLVQLVLLAGKLNT. A helical membrane pass occupies residues 417–437; that stretch reads LAAVVTVFYLVAYAAVDLSCL. Over 438-466 the chain is Cytoplasmic; it reads SLEWASAPNFRPTFSLFSWHTCLLGVASC. A helical membrane pass occupies residues 467 to 487; it reads LLMMFLISPGAAGGSLLLMGL. The Extracellular portion of the chain corresponds to 488–740; that stretch reads LSALLTARGG…LLRPRGGPGY (253 aa). The disordered stretch occupies residues 645 to 678; sequence PAFSEPAEGTREGGSPALSTLFPPPRAPGSPRAL. Residues 741-761 traverse the membrane as a helical segment; the sequence is VDVCGLFLLQMATILSMVPAW. Topologically, residues 762-914 are cytoplasmic; it reads HSARLRIFLC…GVTPVTCTDL (153 aa). Residues 843–864 are disordered; sequence QQGRGTGGGPGGPEGRDGEEGP. Over residues 846–855 the composition is skewed to gly residues; it reads RGTGGGPGGP.

The protein belongs to the SLC12A transporter family. In terms of assembly, interacts with SLC12A1.

Its subcellular location is the cell membrane. It localises to the lysosome membrane. Its function is as follows. May be an inhibitor of SLC12A1. Seems to correspond to a subunit of a multimeric transport system and thus, additional subunits may be required for its function. May play a role in lysosomal ion flux and osmoregulation. The chain is Solute carrier family 12 member 9 (Slc12a9) from Rattus norvegicus (Rat).